The chain runs to 443 residues: ATP-dependent protease ATPase subunit HslU (443 aa).

Residues isoleucine 19 and 61 to 66 (GVGKTE) each bind ATP. A disordered region spans residues 139-158 (PPRDIGFSQPEEKDSNTRQV). Residues aspartate 256, glutamate 321, and arginine 393 each coordinate ATP.

Belongs to the ClpX chaperone family. HslU subfamily. A double ring-shaped homohexamer of HslV is capped on each side by a ring-shaped HslU homohexamer. The assembly of the HslU/HslV complex is dependent on binding of ATP.

It localises to the cytoplasm. ATPase subunit of a proteasome-like degradation complex; this subunit has chaperone activity. The binding of ATP and its subsequent hydrolysis by HslU are essential for unfolding of protein substrates subsequently hydrolyzed by HslV. HslU recognizes the N-terminal part of its protein substrates and unfolds these before they are guided to HslV for hydrolysis. This is ATP-dependent protease ATPase subunit HslU from Cupriavidus taiwanensis (strain DSM 17343 / BCRC 17206 / CCUG 44338 / CIP 107171 / LMG 19424 / R1) (Ralstonia taiwanensis (strain LMG 19424)).